The primary structure comprises 446 residues: 3-phosphoshikimate 1-carboxyvinyltransferase (446 aa).

Positions 27, 28, and 32 each coordinate 3-phosphoshikimate. Phosphoenolpyruvate is bound at residue Lys27. Gly100 and Arg128 together coordinate phosphoenolpyruvate. Residues Ser177, Gln179, Asp330, and Lys357 each coordinate 3-phosphoshikimate. Gln179 serves as a coordination point for phosphoenolpyruvate. The active-site Proton acceptor is the Asp330. The phosphoenolpyruvate site is built by Arg361 and Arg406.

It belongs to the EPSP synthase family. In terms of assembly, monomer.

The protein localises to the cytoplasm. The catalysed reaction is 3-phosphoshikimate + phosphoenolpyruvate = 5-O-(1-carboxyvinyl)-3-phosphoshikimate + phosphate. It functions in the pathway metabolic intermediate biosynthesis; chorismate biosynthesis; chorismate from D-erythrose 4-phosphate and phosphoenolpyruvate: step 6/7. Its function is as follows. Catalyzes the transfer of the enolpyruvyl moiety of phosphoenolpyruvate (PEP) to the 5-hydroxyl of shikimate-3-phosphate (S3P) to produce enolpyruvyl shikimate-3-phosphate and inorganic phosphate. This Sphingopyxis alaskensis (strain DSM 13593 / LMG 18877 / RB2256) (Sphingomonas alaskensis) protein is 3-phosphoshikimate 1-carboxyvinyltransferase.